A 27-amino-acid polypeptide reads, in one-letter code: MAPCSCKSCGTSCAGSCTSCSCGSCSH.

Positions 1–18 (MAPCSCKSCGTSCAGSCT) are enriched in low complexity. The disordered stretch occupies residues 1 to 27 (MAPCSCKSCGTSCAGSCTSCSCGSCSH). 7 residues coordinate Cu(+): cysteine 4, cysteine 6, cysteine 9, cysteine 13, cysteine 20, cysteine 22, and cysteine 25.

This sequence belongs to the metallothionein superfamily. Type 8 family.

The polypeptide is Metallothionein-like protein CAP5 (CAP5) (Colletotrichum gloeosporioides (Anthracnose fungus)).